A 54-amino-acid polypeptide reads, in one-letter code: Large ribosomal subunit protein bL32c (54 aa).

Positions 1 to 20 (MAVPKKRVSKSKRDMRKTTW) are enriched in basic residues. The disordered stretch occupies residues 1–54 (MAVPKKRVSKSKRDMRKTTWKNKASKEAKKALSLAKSVSTGKSKSKGFQIKSSN). A compositionally biased stretch (low complexity) spans 31 to 42 (ALSLAKSVSTGK).

Belongs to the bacterial ribosomal protein bL32 family.

The protein resides in the plastid. The protein localises to the chloroplast. This chain is Large ribosomal subunit protein bL32c, found in Chlorokybus atmophyticus (Soil alga).